An 803-amino-acid polypeptide reads, in one-letter code: MADMSVKQLADLVRTTPERLLEQLKEAGVAITHVDQTISDEEKRKLLLHLKTSHSTETGKKRSKIVLKRKKLSVVKSGKKSVNVEIRSKRTYTKPVVEQKRETEPAPTQEVPLTSDTTNLNEKAEVNVATLEKAVEAEVKEEAKKTPSEKKETPKKGPRKETRRSRKPDKEDKWEREELHMTKLVEERRRRHKPAHMPDSDNASAKLEQGFARPTAPVVREVALPESITVADLAQKMSVKAAEVIKAMMKLGAMVTINQRIDQETAAIVVEEMGHKPKLIKEDVLEENLVATLGEQTGEAVPRAPVVTIMGHVDHGKTSLLDYIRRTKVTSTEAGGITQHIGAYHVETELGMITFLDTPGHEAFTAMRARGAKCTDIVVLVVAADDGVMPQTVEAIQHARAAKVPVVVAVNKIDKPEADPERIKTELSTHDVLPEEWGGDTMFQPISAKTGEGIDALLERILLQAEVLELKAVDNGPARGMVVESRLDRGRGPVATVLVTSGELHLGDILLVGREYGRVRAMIGDDGRPCESAGPSMPVEVLGLSGTPVAGEEAIVVPDERKAREIARFRQGKYREVRLAKKQTAHLERIFDRMGEGKQNTLNIVLKADVQGSLEALTEALNKLSTDEVKVNIIASGVGGITESDVNLAIASDAVVIGFNVRADAPTRVLVEREGVDLRYYSIIYDLIDEVKKALSGLLAPEFEEKIVGLAEVRDVFRSSKIGAIAGCMVVEGVVRRHLPIRVLRDNVVIYEGQLESLRRYKEDVAEVRQGTECGIGVKNYNDVKVGDQIEVYEKTQVHRTIA.

Disordered stretches follow at residues 95–125 (PVVE…EKAE) and 138–178 (EVKE…EREE). Positions 111–121 (VPLTSDTTNLN) are enriched in polar residues. Positions 138-155 (EVKEEAKKTPSEKKETPK) are enriched in basic and acidic residues. Residues 156 to 167 (KGPRKETRRSRK) are compositionally biased toward basic residues. The segment covering 168–178 (PDKEDKWEREE) has biased composition (basic and acidic residues). In terms of domain architecture, tr-type G spans 302–471 (PRAPVVTIMG…LLQAEVLELK (170 aa)). The interval 311-318 (GHVDHGKT) is G1. 311 to 318 (GHVDHGKT) is a binding site for GTP. Residues 336-340 (GITQH) form a G2 region. A G3 region spans residues 357–360 (DTPG). Residues 357–361 (DTPGH) and 411–414 (NKID) each bind GTP. The tract at residues 411-414 (NKID) is G4. Residues 447–449 (SAK) form a G5 region.

Belongs to the TRAFAC class translation factor GTPase superfamily. Classic translation factor GTPase family. IF-2 subfamily.

It is found in the cytoplasm. One of the essential components for the initiation of protein synthesis. Protects formylmethionyl-tRNA from spontaneous hydrolysis and promotes its binding to the 30S ribosomal subunits. Also involved in the hydrolysis of GTP during the formation of the 70S ribosomal complex. The polypeptide is Translation initiation factor IF-2 (Coxiella burnetii (strain CbuK_Q154) (Coxiella burnetii (strain Q154))).